The chain runs to 632 residues: tRNA uridine 5-carboxymethylaminomethyl modification enzyme MnmG (632 aa).

FAD-binding positions include 15–20 (GAGHAG), isoleucine 127, and serine 182. 276 to 290 (GPRYCPSIEDKIVRF) is an NAD(+) binding site. Residue glutamine 373 coordinates FAD.

It belongs to the MnmG family. As to quaternary structure, homodimer. Heterotetramer of two MnmE and two MnmG subunits. Requires FAD as cofactor.

It is found in the cytoplasm. NAD-binding protein involved in the addition of a carboxymethylaminomethyl (cmnm) group at the wobble position (U34) of certain tRNAs, forming tRNA-cmnm(5)s(2)U34. In Streptococcus pyogenes serotype M4 (strain MGAS10750), this protein is tRNA uridine 5-carboxymethylaminomethyl modification enzyme MnmG.